The chain runs to 928 residues: MYCBP-associated protein (928 aa).

2 disordered regions span residues 1 to 38 (MKKA…PVSN) and 164 to 183 (EEPK…APPL). The span at 164-177 (EEPKPKSPKEEKRP) shows a compositional bias: basic and acidic residues. Phosphoserine is present on serine 557. Residue threonine 558 is modified to Phosphothreonine. Serine 564 bears the Phosphoserine mark. The interval 786–881 (IPDEGQKSPP…SSATSQEPID (96 aa)) is disordered. The segment covering 806-865 (LGKEDRRGGAQEKKQLSARDKEEKKGSKTPSKEDRLNSKKQKAKDDKKVVKSTSRDRLLS) has biased composition (basic and acidic residues).

As to quaternary structure, interacts with MYCBP. Expressed in brain, retina, testis, heart and lung. Not detected in liver, kidney or intestine. In brain, highly abundant in CNS neurons of the hippocampus and cerebellum. Strongly expressed in cochlea and vestibular sensory epithelia. In both the organ of Corti and the vestibular organ, expression is restricted to hair cells.

The protein localises to the cytoplasm. The protein resides in the membrane. In terms of biological role, may play a role in spermatogenesis. May be involved in synaptic processes. The sequence is that of MYCBP-associated protein from Rattus norvegicus (Rat).